The chain runs to 254 residues: N-acetylglucosaminyldiphosphoundecaprenol N-acetyl-beta-D-mannosaminyltransferase (254 aa).

This sequence belongs to the glycosyltransferase 26 family. TagA/TarA subfamily.

The enzyme catalyses UDP-N-acetyl-alpha-D-mannosamine + N-acetyl-alpha-D-glucosaminyl-di-trans,octa-cis-undecaprenyl diphosphate = N-acetyl-beta-D-mannosaminyl-(1-&gt;4)-N-acetyl-alpha-D-glucosaminyl di-trans,octa-cis-undecaprenyl diphosphate + UDP + H(+). Its pathway is cell wall biogenesis; poly(ribitol phosphate) teichoic acid biosynthesis. Its function is as follows. Catalyzes the conversion of GlcNAc-PP-undecaprenol into ManNAc-GlcNAc-PP-undecaprenol, the first committed lipid intermediate in the de novo synthesis of teichoic acid. This Staphylococcus aureus (strain NCTC 8325 / PS 47) protein is N-acetylglucosaminyldiphosphoundecaprenol N-acetyl-beta-D-mannosaminyltransferase.